A 397-amino-acid chain; its full sequence is Bifunctional enzyme IspD/IspF (397 aa).

The 2-C-methyl-D-erythritol 4-phosphate cytidylyltransferase stretch occupies residues 1-236 (MSIAAVILAA…QKKMQMFPDI (236 aa)). The segment at 237–397 (RTGNGYDVHS…NVLYPGEIPK (161 aa)) is 2-C-methyl-D-erythritol 2,4-cyclodiphosphate synthase. Residues Asp243 and His245 each coordinate a divalent metal cation. Residues 243-245 (DVH) and 269-270 (HS) each bind 4-CDP-2-C-methyl-D-erythritol 2-phosphate. His277 provides a ligand contact to a divalent metal cation. Residues 291–293 (DIG), 367–370 (TTNE), Phe374, and Arg377 each bind 4-CDP-2-C-methyl-D-erythritol 2-phosphate.

In the N-terminal section; belongs to the IspD/TarI cytidylyltransferase family. IspD subfamily. This sequence in the C-terminal section; belongs to the IspF family. Requires a divalent metal cation as cofactor.

It catalyses the reaction 2-C-methyl-D-erythritol 4-phosphate + CTP + H(+) = 4-CDP-2-C-methyl-D-erythritol + diphosphate. The catalysed reaction is 4-CDP-2-C-methyl-D-erythritol 2-phosphate = 2-C-methyl-D-erythritol 2,4-cyclic diphosphate + CMP. The protein operates within isoprenoid biosynthesis; isopentenyl diphosphate biosynthesis via DXP pathway; isopentenyl diphosphate from 1-deoxy-D-xylulose 5-phosphate: step 2/6. It participates in isoprenoid biosynthesis; isopentenyl diphosphate biosynthesis via DXP pathway; isopentenyl diphosphate from 1-deoxy-D-xylulose 5-phosphate: step 4/6. In terms of biological role, bifunctional enzyme that catalyzes the formation of 4-diphosphocytidyl-2-C-methyl-D-erythritol from CTP and 2-C-methyl-D-erythritol 4-phosphate (MEP) (IspD), and catalyzes the conversion of 4-diphosphocytidyl-2-C-methyl-D-erythritol 2-phosphate (CDP-ME2P) to 2-C-methyl-D-erythritol 2,4-cyclodiphosphate (ME-CPP) with a corresponding release of cytidine 5-monophosphate (CMP) (IspF). The polypeptide is Bifunctional enzyme IspD/IspF (Bartonella henselae (strain ATCC 49882 / DSM 28221 / CCUG 30454 / Houston 1) (Rochalimaea henselae)).